A 282-amino-acid chain; its full sequence is NADPH-dependent 7-cyano-7-deazaguanine reductase (282 aa).

Position 88-90 (88-90 (IES)) interacts with substrate. 90–91 (SK) is a binding site for NADPH. Residue cysteine 190 is the Thioimide intermediate of the active site. Aspartate 197 (proton donor) is an active-site residue. 229 to 230 (HE) contacts substrate. 258 to 259 (RG) serves as a coordination point for NADPH.

Belongs to the GTP cyclohydrolase I family. QueF type 2 subfamily. Homodimer.

The protein resides in the cytoplasm. The catalysed reaction is 7-aminomethyl-7-carbaguanine + 2 NADP(+) = 7-cyano-7-deazaguanine + 2 NADPH + 3 H(+). The protein operates within tRNA modification; tRNA-queuosine biosynthesis. Its function is as follows. Catalyzes the NADPH-dependent reduction of 7-cyano-7-deazaguanine (preQ0) to 7-aminomethyl-7-deazaguanine (preQ1). The protein is NADPH-dependent 7-cyano-7-deazaguanine reductase of Escherichia coli O127:H6 (strain E2348/69 / EPEC).